The sequence spans 1755 residues: MESQQLSQHSPISHGSACASVTSKEVHTNQDPLDVSASKTEECEKASTKANSQQTTTPASSAVPENPHHASPQPASVPPPQNGPYPQQCMMTQNQANPSGWSFYGHPSMIPYTPYQMSPMYFPPGPQSQFPQYPSSVGTPLSTPSPESGNTFTDSSSADSDMTSTKKYVRPPPMLTSPNDFPNWVKTYIKFLQNSNLGGIIPTVNGKPVRQITDDELTFLYNTFQIFAPSQFLPTWVKDILSVDYTDIMKILSKSIEKMQSDTQEANDIVTLANLQYNGSTPADAFETKVTNIIDRLNNNGIHINNKVACQLIMRGLSGEYKFLRYTRHRHLNMTVAELFLDIHAIYEEQQGSRNSKPNYRRNLSDEKNDSRSYTNTTKPKVIARNPQKTNNSKSKTARAHNVSTSNNSPSTDNDSISKSTTEPIQLNNKHDLHLGQELTESTVNHTNHSDDELPGHLLLDSGASRTLIRSAHHIHSASSNPDINVVDAQKRNIPINAIGDLQFHFQDNTKTSIKVLHTPNIAYDLLSLNELAAVDITACFTKNVLERSDGTVLAPIVKYGDFYWVSKKYLLPSNISVPTINNVHTSESTRKYPYPFIHRMLAHANAQTIRYSLKNNTITYFNESDVDWSSAIDYQCPDCLIGKSTKHRHIKGSRLKYQNSYEPFQYLHTDIFGPVHNLPNSAPSYFISFTDETTKFRWVYPLHDRREDSILDVFTTILAFIKNQFQASVLVIQMDRGSEYTNRTLHKFLEKNGITPCYTTTADSRAHGVAERLNRTLLDDCRTQLQCSGLPNHLWFSAIEFSTIVRNSLASPKSKKSARQHAGLAGLDISTLLPFGQPVIVNDHNPNSKIHPRGIPGYALHPSRNSYGYIIYLPSLKKTVDTTNYVILQGKESRLDQFNYDALTFDEDLNRLTASYHSFIASNEIQESNDLNIESDHDFQSDIELHPEQPRNVLSKAVSPTDSTPPSTHTEDSKRVSKTNIRAPREVDPNISESNILPSKKRSSTPQISNIESTGSGGMHKLNVPLLAPMSQSNTHESSHASKSKDFRHSDSYSENETNHTNVPISSTGGTNNKTVPQISDQETEKRIIHRSPSIDASPPENNSSHNIVPIKTPTTVSEQNTEESIIADLPLPDLPPESPTEFPDPFKELPPINSRQTNSSLGGIGDSNAYTTINSKKRSLEDNETEIKVSRDTWNTKNMRSLEPPRSKKRIHLIAAVKAVKSIKPIRTTLRYDEAITYNKDIKEKEKYIEAYHKEVNQLLKMKTWDTDEYYDRKEIDPKRVINSMFIFNKKRDGTHKARFVARGDIQHPDTYDSGMQSNTVHHYALMTSLSLALDNNYYITQLDISSAYLYADIKEELYIRPPPHLGMNDKLIRLKKSLYGLKQSGANWYETIKSYLIKQCGMEEVRGWSCVFKNSQVTICLFVDDMILFSKDLNANKKIITTLKKQYDTKIINLGESDNEIQYDILGLEIKYQRGKYMKLGMENSLTEKIPKLNVPLNPKGRKLSAPGQPGLYIDQDELEIDEDEYKEKVHEMQKLIGLASYVGYKFRFDLLYYINTLAQHILFPSRQVLDMTYELIQFMWDTRDKQLIWHKNKPTEPDNKLVAISDASYGNQPYYKSQIGNIYLLNGKVIGGKSTKASLTCTSTTEAEIHAISESVPLLNNLSYLIQELNKKPIIKGLLTDSRSTISIIKSTNEEKFRNRFFGTKAMRLRDEVSGNNLYVYYIETKKNIADVMTKPLPIKTFKLLTNKWIH.

3 stretches are compositionally biased toward polar residues: residues 1 to 23 (MESQ…SVTS), 48 to 60 (TKAN…TPAS), and 127 to 152 (QSQF…GNTF). 3 disordered regions span residues 1–93 (MESQ…MMTQ), 126–174 (PQSQ…PPPM), and 352–421 (GSRN…SKST). A compositionally biased stretch (low complexity) spans 153–165 (TDSSSADSDMTST). Positions 299-401 (NNGIHINNKV…NSKSKTARAH (103 aa)) are RNA-binding. Over residues 402–418 (NVSTSNNSPSTDNDSIS) the composition is skewed to low complexity. S416 carries the phosphoserine modification. D461 serves as the catalytic For protease activity; shared with dimeric partner. Residues 583–640 (NVHTSESTRKYPYPFIHRMLAHANAQTIRYSLKNNTITYFNESDVDWSSAIDYQCPDC) form an integrase-type zinc finger-like region. The Integrase catalytic domain maps to 660 to 835 (NSYEPFQYLH…AGLDISTLLP (176 aa)). Mg(2+) contacts are provided by D671 and D736. Disordered regions lie at residues 956–1087 (SKAV…ETEK), 1092–1111 (RSPS…NIVP), and 1130–1187 (DLPL…DNET). Residues 960 to 969 (SPTDSTPPST) are compositionally biased toward low complexity. Residues 1005–1015 (STPQISNIEST) are compositionally biased toward polar residues. Residues 1038–1053 (ESSHASKSKDFRHSDS) are compositionally biased toward basic and acidic residues. 2 stretches are compositionally biased toward polar residues: residues 1054–1082 (YSEN…QISD) and 1101–1111 (PENNSSHNIVP). The Bipartite nuclear localization signal motif lies at 1178–1212 (KKRSLEDNETEIKVSRDTWNTKNMRSLEPPRSKKR). Positions 1338-1476 (NNYYITQLDI…DILGLEIKYQ (139 aa)) constitute a Reverse transcriptase Ty1/copia-type domain. The Mg(2+) site is built by D1346, D1427, D1428, D1610, E1652, and D1685. An RNase H Ty1/copia-type domain is found at 1610–1752 (DASYGNQPYY…IKTFKLLTNK (143 aa)).

In terms of assembly, the capsid protein forms a homotrimer, from which the VLPs are assembled. The protease is a homodimer, whose active site consists of two apposed aspartic acid residues. Post-translationally, initially, virus-like particles (VLPs) are composed of the structural unprocessed proteins Gag and Gag-Pol, and also contain the host initiator methionine tRNA (tRNA(i)-Met) which serves as a primer for minus-strand DNA synthesis, and a dimer of genomic Ty RNA. Processing of the polyproteins occurs within the particle and proceeds by an ordered pathway, called maturation. First, the protease (PR) is released by autocatalytic cleavage of the Gag-Pol polyprotein yielding capsid protein p45 and a Pol-p154 precursor protein. This cleavage is a prerequisite for subsequent processing of Pol-p154 at the remaining sites to release the mature structural and catalytic proteins. Maturation takes place prior to the RT reaction and is required to produce transposition-competent VLPs.

It is found in the cytoplasm. The protein resides in the nucleus. It carries out the reaction DNA(n) + a 2'-deoxyribonucleoside 5'-triphosphate = DNA(n+1) + diphosphate. The enzyme catalyses Endonucleolytic cleavage to 5'-phosphomonoester.. Functionally, capsid protein (CA) is the structural component of the virus-like particle (VLP), forming the shell that encapsulates the retrotransposons dimeric RNA genome. The particles are assembled from trimer-clustered units and there are holes in the capsid shells that allow for the diffusion of macromolecules. CA also has nucleocapsid-like chaperone activity, promoting primer tRNA(i)-Met annealing to the multipartite primer-binding site (PBS), dimerization of Ty1 RNA and initiation of reverse transcription. In terms of biological role, the aspartyl protease (PR) mediates the proteolytic cleavages of the Gag and Gag-Pol polyproteins after assembly of the VLP. Reverse transcriptase/ribonuclease H (RT) is a multifunctional enzyme that catalyzes the conversion of the retro-elements RNA genome into dsDNA within the VLP. The enzyme displays a DNA polymerase activity that can copy either DNA or RNA templates, and a ribonuclease H (RNase H) activity that cleaves the RNA strand of RNA-DNA heteroduplexes during plus-strand synthesis and hydrolyzes RNA primers. The conversion leads to a linear dsDNA copy of the retrotransposon that includes long terminal repeats (LTRs) at both ends. Its function is as follows. Integrase (IN) targets the VLP to the nucleus, where a subparticle preintegration complex (PIC) containing at least integrase and the newly synthesized dsDNA copy of the retrotransposon must transit the nuclear membrane. Once in the nucleus, integrase performs the integration of the dsDNA into the host genome. The sequence is that of Transposon Ty1-PL Gag-Pol polyprotein (TY1B-PL) from Saccharomyces cerevisiae (strain ATCC 204508 / S288c) (Baker's yeast).